Here is a 210-residue protein sequence, read N- to C-terminus: ATP phosphoribosyltransferase (210 aa).

It belongs to the ATP phosphoribosyltransferase family. Short subfamily. In terms of assembly, heteromultimer composed of HisG and HisZ subunits.

It is found in the cytoplasm. It catalyses the reaction 1-(5-phospho-beta-D-ribosyl)-ATP + diphosphate = 5-phospho-alpha-D-ribose 1-diphosphate + ATP. It participates in amino-acid biosynthesis; L-histidine biosynthesis; L-histidine from 5-phospho-alpha-D-ribose 1-diphosphate: step 1/9. Catalyzes the condensation of ATP and 5-phosphoribose 1-diphosphate to form N'-(5'-phosphoribosyl)-ATP (PR-ATP). Has a crucial role in the pathway because the rate of histidine biosynthesis seems to be controlled primarily by regulation of HisG enzymatic activity. In Petrotoga mobilis (strain DSM 10674 / SJ95), this protein is ATP phosphoribosyltransferase.